The chain runs to 231 residues: Octanoyltransferase (231 aa).

Residues 29–231 (PQDPDLLWLC…GRQLCIWLAP (203 aa)) enclose the BPL/LPL catalytic domain. Residues 68–75 (RGGQVTFH), 164–166 (ALG), and 177–179 (GVA) each bind substrate. Cys-195 (acyl-thioester intermediate) is an active-site residue.

This sequence belongs to the LipB family.

The protein resides in the cytoplasm. It carries out the reaction octanoyl-[ACP] + L-lysyl-[protein] = N(6)-octanoyl-L-lysyl-[protein] + holo-[ACP] + H(+). The protein operates within protein modification; protein lipoylation via endogenous pathway; protein N(6)-(lipoyl)lysine from octanoyl-[acyl-carrier-protein]: step 1/2. Its function is as follows. Catalyzes the transfer of endogenously produced octanoic acid from octanoyl-acyl-carrier-protein onto the lipoyl domains of lipoate-dependent enzymes. Lipoyl-ACP can also act as a substrate although octanoyl-ACP is likely to be the physiological substrate. The chain is Octanoyltransferase from Verminephrobacter eiseniae (strain EF01-2).